A 757-amino-acid chain; its full sequence is MSDINTESGESTSLPNSTDPPLSDVNIDVEDDDTAESISSLQPIVSNTTNPPEEPINPVLGQYHQACQKGDLATVKQLLDSGVLDLNTDLTGDITGLHWASINNRLSVVKYLISQGIDVNAKAGDLEATPLHWAARYGYVHIVDCLLNKGADPTMCDMQGFNLLHLAVNSSNVMLVAYVLFFVVAKGIIDIDCQDPKGRTPLLWAAYQGDSLSVMLLLKFGASTKIVDEGGFTPLHWATVKGQPYVLTHLIRDGADFFLKTNDGKDCFTIAQEMNTSHSFKDALSICGFNQDGYPKRKLFKKSDHAKVITFFVPLVALSIIFILFTHLHPLFALLISLIFGLAVNKALKELILPSYSNYGLHSTSLLKSPFLSGTFFGSLLLLTIVWIFKIAPFTIFKSRLLTNFFMFLILMQIYYLFIKLIFSDPGCVPIETDHENVRGTIKELLDTGKFDIKNFCLETWIRKPLRSHFSTLNTHNVARFDHFCPWIYNDIGLKNHKNFMWFILLTEVGIWFFISLTMKYFDILEDTNEDVACFLLGDDELCAGFVYDRFTFLIALWALIQSVWVGFLIVVQVFQTFTGVTNKEFNKYVKEKKNQHAFDPIFFNDTFNTTPEELRNDDDDTAASRTGNNPNHSNGTTIPSEGSRINTRKPRTCFNLCFAITGLDQVRTIVRETLGIGGANEMSRMQLLSSIPTNYGWKRNLADFWLTSDVMAPIWRRLFYSPVESRALLNGVEVDYFKLYDFPEKTYPEPTGPESV.

Polar residues-rich tracts occupy residues 1 to 20 (MSDINTESGESTSLPNSTDP) and 36 to 46 (ESISSLQPIVS). A disordered region spans residues 1 to 54 (MSDINTESGESTSLPNSTDPPLSDVNIDVEDDDTAESISSLQPIVSNTTNPPEE). The Cytoplasmic segment spans residues 1–307 (MSDINTESGE…KLFKKSDHAK (307 aa)). ANK repeat units lie at residues 58-88 (PVLGQYHQACQKGDLATVKQLLDSGVLDLNT), 92-121 (GDITGLHWASINNRLSVVKYLISQGIDVNA), 126-155 (LEATPLHWAARYGYVHIVDCLLNKGADPTM), 159-188 (QGFNLLHLAVNSSNVMLVAYVLFFVVAKGI), 197-226 (KGRTPLLWAAYQGDSLSVMLLLKFGASTKI), and 230-259 (GGFTPLHWATVKGQPYVLTHLIRDGADFFL). The helical transmembrane segment at 308-328 (VITFFVPLVALSIIFILFTHL) threads the bilayer. Residues 329-331 (HPL) lie on the Lumenal side of the membrane. Residues 332-352 (FALLISLIFGLAVNKALKELI) form a helical membrane-spanning segment. Residues 353-375 (LPSYSNYGLHSTSLLKSPFLSGT) are Cytoplasmic-facing. The helical transmembrane segment at 376 to 396 (FFGSLLLLTIVWIFKIAPFTI) threads the bilayer. Residues 397-402 (FKSRLL) lie on the Lumenal side of the membrane. A helical membrane pass occupies residues 403-423 (TNFFMFLILMQIYYLFIKLIF). At 424 to 498 (SDPGCVPIET…YNDIGLKNHK (75 aa)) the chain is on the cytoplasmic side. Residues 455–505 (NFCLETWIRKPLRSHFSTLNTHNVARFDHFCPWIYNDIGLKNHKNFMWFIL) form the DHHC domain. Cys485 acts as the S-palmitoyl cysteine intermediate in catalysis. The chain crosses the membrane as a helical span at residues 499–519 (NFMWFILLTEVGIWFFISLTM). Over 520-550 (KYFDILEDTNEDVACFLLGDDELCAGFVYDR) the chain is Lumenal. The chain crosses the membrane as a helical span at residues 551–571 (FTFLIALWALIQSVWVGFLIV). Over 572–757 (VQVFQTFTGV…YPEPTGPESV (186 aa)) the chain is Cytoplasmic. The disordered stretch occupies residues 614–647 (ELRNDDDDTAASRTGNNPNHSNGTTIPSEGSRIN). The span at 624–646 (ASRTGNNPNHSNGTTIPSEGSRI) shows a compositional bias: polar residues.

The protein belongs to the DHHC palmitoyltransferase family. AKR/ZDHHC17 subfamily.

It localises to the early endosome membrane. It is found in the golgi apparatus membrane. The catalysed reaction is L-cysteinyl-[protein] + hexadecanoyl-CoA = S-hexadecanoyl-L-cysteinyl-[protein] + CoA. Palmitoyltransferase specific for casein kinase 1. In Naumovozyma castellii (Yeast), this protein is Palmitoyltransferase AKR1 (AKR1).